Here is a 383-residue protein sequence, read N- to C-terminus: Erythronate-4-phosphate dehydrogenase (383 aa).

Residues Ser45 and Thr66 each contribute to the substrate site. Residues Asp146 and Thr175 each coordinate NAD(+). Arg208 is an active-site residue. Position 232 (Asp232) interacts with NAD(+). The active site involves Glu237. His254 functions as the Proton donor in the catalytic mechanism. Residue Gly257 coordinates NAD(+).

The protein belongs to the D-isomer specific 2-hydroxyacid dehydrogenase family. PdxB subfamily. In terms of assembly, homodimer.

It localises to the cytoplasm. The enzyme catalyses 4-phospho-D-erythronate + NAD(+) = (R)-3-hydroxy-2-oxo-4-phosphooxybutanoate + NADH + H(+). It participates in cofactor biosynthesis; pyridoxine 5'-phosphate biosynthesis; pyridoxine 5'-phosphate from D-erythrose 4-phosphate: step 2/5. In terms of biological role, catalyzes the oxidation of erythronate-4-phosphate to 3-hydroxy-2-oxo-4-phosphonooxybutanoate. The protein is Erythronate-4-phosphate dehydrogenase of Chromohalobacter salexigens (strain ATCC BAA-138 / DSM 3043 / CIP 106854 / NCIMB 13768 / 1H11).